Reading from the N-terminus, the 137-residue chain is Small ribosomal subunit protein bS6 (137 aa).

A disordered region spans residues 96-137 (ITEASPMAKAKDERDTRRSSEERAPRAEAAEEVEESAENTAE). A compositionally biased stretch (basic and acidic residues) spans 104–124 (KAKDERDTRRSSEERAPRAEA). Over residues 125–137 (AEEVEESAENTAE) the composition is skewed to acidic residues.

The protein belongs to the bacterial ribosomal protein bS6 family.

Binds together with bS18 to 16S ribosomal RNA. The polypeptide is Small ribosomal subunit protein bS6 (Shewanella halifaxensis (strain HAW-EB4)).